The following is a 375-amino-acid chain: Muconate cycloisomerase 1 (375 aa).

Lysine 171 (proton acceptor) is an active-site residue. Aspartate 200, glutamate 226, and aspartate 251 together coordinate Mn(2+). Glutamate 329 (proton donor) is an active-site residue.

Belongs to the mandelate racemase/muconate lactonizing enzyme family. Homooctamer. The cofactor is Mn(2+).

The enzyme catalyses (S)-muconolactone = cis,cis-muconate + H(+). The protein operates within aromatic compound metabolism; beta-ketoadipate pathway; 5-oxo-4,5-dihydro-2-furylacetate from catechol: step 2/3. Functionally, catalyzes a syn cycloisomerization. This chain is Muconate cycloisomerase 1 (catB), found in Pseudomonas putida (Arthrobacter siderocapsulatus).